The following is a 516-amino-acid chain: Bifunctional purine biosynthesis protein PurH (516 aa).

The region spanning 1–149 (MSERQPIRRA…KNHANVAVLT (149 aa)) is the MGS-like domain.

It belongs to the PurH family.

It carries out the reaction (6R)-10-formyltetrahydrofolate + 5-amino-1-(5-phospho-beta-D-ribosyl)imidazole-4-carboxamide = 5-formamido-1-(5-phospho-D-ribosyl)imidazole-4-carboxamide + (6S)-5,6,7,8-tetrahydrofolate. The enzyme catalyses IMP + H2O = 5-formamido-1-(5-phospho-D-ribosyl)imidazole-4-carboxamide. Its pathway is purine metabolism; IMP biosynthesis via de novo pathway; 5-formamido-1-(5-phospho-D-ribosyl)imidazole-4-carboxamide from 5-amino-1-(5-phospho-D-ribosyl)imidazole-4-carboxamide (10-formyl THF route): step 1/1. The protein operates within purine metabolism; IMP biosynthesis via de novo pathway; IMP from 5-formamido-1-(5-phospho-D-ribosyl)imidazole-4-carboxamide: step 1/1. The chain is Bifunctional purine biosynthesis protein PurH from Cutibacterium acnes (strain DSM 16379 / KPA171202) (Propionibacterium acnes).